Reading from the N-terminus, the 188-residue chain is Ribosome-recycling factor (188 aa).

It belongs to the RRF family.

The protein localises to the cytoplasm. Its function is as follows. Responsible for the release of ribosomes from messenger RNA at the termination of protein biosynthesis. May increase the efficiency of translation by recycling ribosomes from one round of translation to another. The chain is Ribosome-recycling factor from Gluconacetobacter diazotrophicus (strain ATCC 49037 / DSM 5601 / CCUG 37298 / CIP 103539 / LMG 7603 / PAl5).